The chain runs to 173 residues: Shikimate kinase 1 (173 aa).

ATP is bound at residue 14-19 (GAGKST). Ser18 is a binding site for Mg(2+). Residues Asp36, Arg60, and Gly82 each coordinate substrate. Arg120 is a binding site for ATP. Residue Arg140 participates in substrate binding. Gln157 lines the ATP pocket.

The protein belongs to the shikimate kinase family. Monomer. The cofactor is Mg(2+).

The protein localises to the cytoplasm. The enzyme catalyses shikimate + ATP = 3-phosphoshikimate + ADP + H(+). It participates in metabolic intermediate biosynthesis; chorismate biosynthesis; chorismate from D-erythrose 4-phosphate and phosphoenolpyruvate: step 5/7. Its function is as follows. Catalyzes the specific phosphorylation of the 3-hydroxyl group of shikimic acid using ATP as a cosubstrate. This is Shikimate kinase 1 from Erwinia tasmaniensis (strain DSM 17950 / CFBP 7177 / CIP 109463 / NCPPB 4357 / Et1/99).